The following is a 125-amino-acid chain: Small ribosomal subunit protein uS12 (125 aa).

A disordered region spans residues 1–28 (MPTISQLIGSERKRLTRKTKSPALKSCP). A 3-methylthioaspartic acid modification is found at aspartate 89. The segment at 104-125 (TAGVKDRRQSRSKYGAKAPKNN) is disordered.

Belongs to the universal ribosomal protein uS12 family. Part of the 30S ribosomal subunit. Contacts proteins S8 and S17. May interact with IF1 in the 30S initiation complex.

In terms of biological role, with S4 and S5 plays an important role in translational accuracy. Its function is as follows. Interacts with and stabilizes bases of the 16S rRNA that are involved in tRNA selection in the A site and with the mRNA backbone. Located at the interface of the 30S and 50S subunits, it traverses the body of the 30S subunit contacting proteins on the other side and probably holding the rRNA structure together. The combined cluster of proteins S8, S12 and S17 appears to hold together the shoulder and platform of the 30S subunit. The polypeptide is Small ribosomal subunit protein uS12 (Prochlorococcus marinus (strain MIT 9515)).